A 286-amino-acid polypeptide reads, in one-letter code: Nucleotide-binding protein PSPA7_5038 (286 aa).

Position 8–15 (8–15 (GRSGSGKS)) interacts with ATP. Position 60-63 (60-63 (DARN)) interacts with GTP.

It belongs to the RapZ-like family.

In terms of biological role, displays ATPase and GTPase activities. This chain is Nucleotide-binding protein PSPA7_5038, found in Pseudomonas paraeruginosa (strain DSM 24068 / PA7) (Pseudomonas aeruginosa (strain PA7)).